The following is a 270-amino-acid chain: Putative hydro-lyase Reut_A2449 (270 aa).

This sequence belongs to the D-glutamate cyclase family.

This Cupriavidus pinatubonensis (strain JMP 134 / LMG 1197) (Cupriavidus necator (strain JMP 134)) protein is Putative hydro-lyase Reut_A2449.